The primary structure comprises 67 residues: Nigrocin-2GRc (67 aa).

An N-terminal signal peptide occupies residues 1 to 22 (MFTMKKSMLLLFFLGTISLSLC). Residues 23-46 (EQERNADEEERRDEEVAKMEEIKR) constitute a propeptide that is removed on maturation. Cysteines 61 and 67 form a disulfide.

Expressed by the skin glands.

It localises to the secreted. Its function is as follows. Antimicrobial peptide active at least against the Gram-positive bacterium S.aureus but with otherwise unclear activity spectrum. Lacks hemolytic activity against rabbit or human erythrocytes. The polypeptide is Nigrocin-2GRc (Odorrana grahami (Yunnanfu frog)).